A 574-amino-acid polypeptide reads, in one-letter code: Zinc finger and BTB domain-containing protein 3 (574 aa).

Residues 74–142 (CDCTVMVGST…MYAGQLTLRG (69 aa)) form the BTB domain. Disordered regions lie at residues 175-277 (AEAD…SSTE) and 305-346 (SLRV…APAP). Residues Lys-181 and Lys-182 each participate in a glycyl lysine isopeptide (Lys-Gly) (interchain with G-Cter in SUMO2) cross-link. The segment covering 187–212 (NSQLPSLEFLSSTSRGTQPSLASAET) has biased composition (polar residues). A compositionally biased stretch (low complexity) spans 323–334 (PPASAPTSAPAP). A Phosphoserine modification is found at Ser-362. The disordered stretch occupies residues 364–403 (EETDVSDEQPQGPERAFPSGGAVYGAQPSQPEAFEDPGAA). 2 C2H2-type zinc fingers span residues 472 to 494 (PTCKTCGKTFSCSYTLRRHATVH) and 500 to 523 (YECRYCLRSYTQSGDLYRHIRKAH). The span at 526–535 (DLAKRSKPDP) shows a compositional bias: basic and acidic residues. Positions 526–574 (DLAKRSKPDPEVGPLLGVQPLPGSPTADRQSSSGGGPPKDFVLAPKTNI) are disordered. Lys-532 is covalently cross-linked (Glycyl lysine isopeptide (Lys-Gly) (interchain with G-Cter in SUMO2)). A Phosphoserine modification is found at Ser-549.

It is found in the nucleus. In terms of biological role, may be involved in transcriptional regulation. The chain is Zinc finger and BTB domain-containing protein 3 (ZBTB3) from Homo sapiens (Human).